A 258-amino-acid polypeptide reads, in one-letter code: Ditrans,polycis-undecaprenyl-diphosphate synthase ((2E,6E)-farnesyl-diphosphate specific) (258 aa).

Aspartate 24 is an active-site residue. Mg(2+) is bound at residue aspartate 24. Residues 25–28, tryptophan 29, arginine 37, histidine 41, and 69–71 contribute to the substrate site; these read GNGR and SSE. Catalysis depends on asparagine 72, which acts as the Proton acceptor. Substrate contacts are provided by residues tryptophan 73, arginine 75, arginine 192, and 198–200; that span reads RIS. Residue glutamate 211 participates in Mg(2+) binding.

Belongs to the UPP synthase family. In terms of assembly, homodimer. Requires Mg(2+) as cofactor.

The enzyme catalyses 8 isopentenyl diphosphate + (2E,6E)-farnesyl diphosphate = di-trans,octa-cis-undecaprenyl diphosphate + 8 diphosphate. In terms of biological role, catalyzes the sequential condensation of isopentenyl diphosphate (IPP) with (2E,6E)-farnesyl diphosphate (E,E-FPP) to yield (2Z,6Z,10Z,14Z,18Z,22Z,26Z,30Z,34E,38E)-undecaprenyl diphosphate (di-trans,octa-cis-UPP). UPP is the precursor of glycosyl carrier lipid in the biosynthesis of bacterial cell wall polysaccharide components such as peptidoglycan and lipopolysaccharide. The protein is Ditrans,polycis-undecaprenyl-diphosphate synthase ((2E,6E)-farnesyl-diphosphate specific) of Xanthomonas campestris pv. campestris (strain ATCC 33913 / DSM 3586 / NCPPB 528 / LMG 568 / P 25).